Consider the following 268-residue polypeptide: Energy-coupling factor transporter transmembrane protein EcfT (268 aa).

Transmembrane regions (helical) follow at residues 26-46 (IVTF…TYAW), 72-92 (IFWL…GTPI), 106-126 (ILNA…STIL), 149-169 (IGVP…FVPL), and 247-267 (VAFA…TWLH).

It belongs to the energy-coupling factor EcfT family. As to quaternary structure, forms a stable energy-coupling factor (ECF) transporter complex composed of 2 membrane-embedded substrate-binding proteins (S component), 2 ATP-binding proteins (A component) and 2 transmembrane proteins (T component). May be able to interact with more than 1 S component at a time.

The protein resides in the cell membrane. In terms of biological role, transmembrane (T) component of an energy-coupling factor (ECF) ABC-transporter complex. Unlike classic ABC transporters this ECF transporter provides the energy necessary to transport a number of different substrates. The protein is Energy-coupling factor transporter transmembrane protein EcfT of Leuconostoc gelidum subsp. gasicomitatum (strain DSM 15947 / CCUG 46042 / CECT 5767 / JCM 12535 / LMG 18811 / NBRC 113245 / TB1-10) (Leuconostoc gasicomitatum).